The primary structure comprises 210 residues: Menaquinone reductase, multiheme cytochrome c subunit (210 aa).

The helical transmembrane segment at 20 to 40 (GGAAPFFVGLVVALVFGWWAF) threads the bilayer. The heme site is built by Cys67, Cys70, His71, Cys88, Cys91, His92, Cys140, Cys143, His144, Cys152, Cys155, His156, Cys186, Cys189, His190, Cys205, Cys208, and His209.

This sequence belongs to the multiheme cytochrome c family. In terms of assembly, the Qrc complex is composed of four subunits: QrcA, QrcB, QrcC and QrcD. Can form a supercomplex with the [NiFe] hydrogenase HynA1 and the tetraheme Type I cytochrome c3 TpIc(3), its physiological electron donors. The cofactor is heme c.

The protein localises to the cell inner membrane. In terms of biological role, component of the respiratory Qrc complex, that catalyzes the reduction of the menaquinone pool using electrons transferred from the reduced periplasmic cytochrome c3, and which is probably involved in sulfate respiration. Is likely essential for growth on H(2) or formate since the periplasmic hydrogenases and/or formate dehydrogenases act as primary electron donors for the Qrc complex. This chain is Menaquinone reductase, multiheme cytochrome c subunit, found in Nitratidesulfovibrio vulgaris (strain ATCC 29579 / DSM 644 / CCUG 34227 / NCIMB 8303 / VKM B-1760 / Hildenborough) (Desulfovibrio vulgaris).